The primary structure comprises 237 residues: UDP-2,3-diacylglucosamine hydrolase (237 aa).

Mn(2+)-binding residues include Asp9, His11, Asp42, Asn80, and His115. 80–81 is a substrate binding site; sequence NR. Substrate is bound by residues Asp123, Ser161, Lys165, Lys168, and His196. Mn(2+) is bound by residues His196 and His198.

It belongs to the LpxH family. Mn(2+) is required as a cofactor.

The protein resides in the cell inner membrane. Its subcellular location is the cytoplasm. It carries out the reaction UDP-2-N,3-O-bis[(3R)-3-hydroxytetradecanoyl]-alpha-D-glucosamine + H2O = 2-N,3-O-bis[(3R)-3-hydroxytetradecanoyl]-alpha-D-glucosaminyl 1-phosphate + UMP + 2 H(+). The protein operates within glycolipid biosynthesis; lipid IV(A) biosynthesis; lipid IV(A) from (3R)-3-hydroxytetradecanoyl-[acyl-carrier-protein] and UDP-N-acetyl-alpha-D-glucosamine: step 4/6. Its function is as follows. Hydrolyzes the pyrophosphate bond of UDP-2,3-diacylglucosamine to yield 2,3-diacylglucosamine 1-phosphate (lipid X) and UMP by catalyzing the attack of water at the alpha-P atom. Involved in the biosynthesis of lipid A, a phosphorylated glycolipid that anchors the lipopolysaccharide to the outer membrane of the cell. This chain is UDP-2,3-diacylglucosamine hydrolase, found in Haemophilus influenzae (strain ATCC 51907 / DSM 11121 / KW20 / Rd).